The sequence spans 749 residues: Chaperone protein dnaK3 (749 aa).

Thr-198 is subject to Phosphothreonine; by autocatalysis. Composition is skewed to basic and acidic residues over residues 643 to 653, 661 to 694, and 711 to 724; these read RWDADPWDRSR, YDDRRSPVSDPYRGERWVEEQTSMSRREPVRDRN, and PTWEEDQPPRRDRS. A disordered region spans residues 643-749; the sequence is RWDADPWDRS…GWDDDDDEWF (107 aa). Over residues 740 to 749 the composition is skewed to acidic residues; sequence GWDDDDDEWF.

It belongs to the heat shock protein 70 family.

Acts as a chaperone. This is Chaperone protein dnaK3 (dnaK3) from Synechococcus elongatus (strain ATCC 33912 / PCC 7942 / FACHB-805) (Anacystis nidulans R2).